The following is a 267-amino-acid chain: Glucosamine-6-phosphate deaminase (267 aa).

Catalysis depends on Asp72, which acts as the Proton acceptor; for enolization step. Asp141 serves as the catalytic For ring-opening step. His143 functions as the Proton acceptor; for ring-opening step in the catalytic mechanism. The active-site For ring-opening step is Glu148.

The protein belongs to the glucosamine/galactosamine-6-phosphate isomerase family. NagB subfamily. As to quaternary structure, homohexamer.

The catalysed reaction is alpha-D-glucosamine 6-phosphate + H2O = beta-D-fructose 6-phosphate + NH4(+). Its pathway is amino-sugar metabolism; N-acetylneuraminate degradation; D-fructose 6-phosphate from N-acetylneuraminate: step 5/5. Its activity is regulated as follows. Allosterically activated by N-acetylglucosamine 6-phosphate (GlcNAc6P). Catalyzes the reversible isomerization-deamination of glucosamine 6-phosphate (GlcN6P) to form fructose 6-phosphate (Fru6P) and ammonium ion. The protein is Glucosamine-6-phosphate deaminase of Haemophilus ducreyi (strain 35000HP / ATCC 700724).